Here is a 418-residue protein sequence, read N- to C-terminus: Putative ion-transport protein YfeO (418 aa).

12 helical membrane passes run 10-30, 54-74, 99-119, 120-140, 149-169, 186-206, 223-243, 258-278, 300-320, 322-342, 343-363, and 371-391; these read LLLS…LIVV, DSPL…GLVI, ALPG…SLGP, EHPI…RLLP, ILAS…AALI, LFAP…FFHP, ILSG…AVWC, VLVL…GGPV, DYFL…ASGF, GGRI…LHEH, VPAV…VLVV, and LFMA…CIVM.

The protein belongs to the chloride channel (TC 2.A.49) family.

It localises to the cell membrane. This is Putative ion-transport protein YfeO from Escherichia coli O8 (strain IAI1).